We begin with the raw amino-acid sequence, 126 residues long: Anti-adapter protein IraD (126 aa).

Belongs to the GpW/Gp25 family. IraD subfamily. As to quaternary structure, interacts with RssB.

Its subcellular location is the cytoplasm. Functionally, inhibits RpoS proteolysis by regulating RssB activity, thereby increasing the stability of the sigma stress factor RpoS during oxidative stress. Its effect on RpoS stability is due to its interaction with RssB, which probably blocks the interaction of RssB with RpoS, and the consequent delivery of the RssB-RpoS complex to the ClpXP protein degradation pathway. In Salmonella arizonae (strain ATCC BAA-731 / CDC346-86 / RSK2980), this protein is Anti-adapter protein IraD.